Reading from the N-terminus, the 419-residue chain is Chaperone protein dnaJ 2 (419 aa).

Residues 14–75 enclose the J domain; the sequence is KFYEILGVPK…EKREIYDQYG (62 aa). The CR-type zinc-finger motif lies at 136–220; that stretch reads GTTKKLSLSR…CKGEKVVSEK (85 aa). 8 residues coordinate Zn(2+): cysteine 149, cysteine 152, cysteine 165, cysteine 168, cysteine 192, cysteine 195, cysteine 208, and cysteine 211. CXXCXGXG motif repeat units follow at residues 149-156, 165-172, 192-199, and 208-215; these read CSKCNGKG, CGGCQGSG, CNDCKGTG, and CPQCKGEK. Residues 378–391 show a composition bias toward basic and acidic residues; sequence TTLHDVNIEDEMKR. Positions 378–419 are disordered; the sequence is TTLHDVNIEDEMKRKAQAQREAYDDDEEDHPGGAQRVQCAQQ. Position 416 is a cysteine methyl ester (cysteine 416). A lipid anchor (S-farnesyl cysteine) is attached at cysteine 416. The propeptide at 417–419 is removed in mature form; the sequence is AQQ.

This sequence belongs to the DnaJ family. A/I subfamily. As to quaternary structure, homodimer. It depends on Zn(2+) as a cofactor. Farnesylated. In terms of tissue distribution, expressed in both etiolated and light-grown tissues.

It localises to the membrane. Its function is as follows. Plays a continuous role in plant development probably in the structural organization of compartments. This chain is Chaperone protein dnaJ 2 (ATJ2), found in Arabidopsis thaliana (Mouse-ear cress).